Reading from the N-terminus, the 190-residue chain is Small ribosomal subunit protein eS7A (190 aa).

Ser-2 carries the post-translational modification N-acetylserine. Residues Lys-83, Lys-84, and Lys-124 each participate in a glycyl lysine isopeptide (Lys-Gly) (interchain with G-Cter in ubiquitin) cross-link.

Belongs to the eukaryotic ribosomal protein eS7 family. In terms of assembly, component of the small ribosomal subunit (SSU). Mature yeast ribosomes consist of a small (40S) and a large (60S) subunit. The 40S small subunit contains 1 molecule of ribosomal RNA (18S rRNA) and 33 different proteins (encoded by 57 genes). The large 60S subunit contains 3 rRNA molecules (25S, 5.8S and 5S rRNA) and 46 different proteins (encoded by 81 genes). Interacts with snoRNA U3. uS11 interacts with MPP10. Component of the ribosomal small subunit (SSU) processome composed of at least 40 protein subunits and snoRNA U3. N-terminally acetylated by acetyltransferase NatA. Post-translationally, ubiquitinated at Lys-83 and Lys-84 in response to stalled ribosomes, leading to activation of the No-Go Decay (NGD) pathway: first monoubiquitinated by MOT2/NOT4, followed by formation by HEL2 of 'Lys-63'-linked polyubiquitin chains on monoubiquitin.

It localises to the cytoplasm. It is found in the nucleus. The protein localises to the nucleolus. Component of the ribosome, a large ribonucleoprotein complex responsible for the synthesis of proteins in the cell. The small ribosomal subunit (SSU) binds messenger RNAs (mRNAs) and translates the encoded message by selecting cognate aminoacyl-transfer RNA (tRNA) molecules. The large subunit (LSU) contains the ribosomal catalytic site termed the peptidyl transferase center (PTC), which catalyzes the formation of peptide bonds, thereby polymerizing the amino acids delivered by tRNAs into a polypeptide chain. The nascent polypeptides leave the ribosome through a tunnel in the LSU and interact with protein factors that function in enzymatic processing, targeting, and the membrane insertion of nascent chains at the exit of the ribosomal tunnel. eS7 is involved in nucleolar processing of pre-18S ribosomal RNA and ribosome assembly. The sequence is that of Small ribosomal subunit protein eS7A from Saccharomyces cerevisiae (strain ATCC 204508 / S288c) (Baker's yeast).